Here is a 675-residue protein sequence, read N- to C-terminus: Alpha-1,4-glucan:maltose-1-phosphate maltosyltransferase 1 (675 aa).

Alpha-maltose 1-phosphate-binding residues include K264, Q324, and D359. D394 functions as the Nucleophile in the catalytic mechanism. N395 serves as a coordination point for alpha-maltose 1-phosphate. E423 acts as the Proton donor in catalysis. 534–535 provides a ligand contact to alpha-maltose 1-phosphate; it reads KY.

The protein belongs to the glycosyl hydrolase 13 family. GlgE subfamily. Homodimer.

The enzyme catalyses alpha-maltose 1-phosphate + [(1-&gt;4)-alpha-D-glucosyl](n) = [(1-&gt;4)-alpha-D-glucosyl](n+2) + phosphate. Its activity is regulated as follows. Is competitively inhibited by alpha-, beta- and gamma-cyclodextrins (cyclic maltooligosaccharides), unlike GlgE from M.tuberculosis. Functionally, maltosyltransferase that uses maltose 1-phosphate (M1P) as the sugar donor to elongate linear or branched alpha-(1-&gt;4)-glucans. Maltooligosaccharides with a degree of polymerization (DP) superior or equal to 4 are efficient acceptors, with DP6 being optimal in the GlgE-catalyzed polymerization with M1P. Is specific for the alpha-anomer of M1P as substrate, since the beta-anomer of M1P gives no activity. Alpha-D-glucose 1-phosphate cannot serve as a donor substrate, but alpha-maltosyl fluoride is an efficient donor in vitro. Exhibits an alpha-retaining catalytic mechanism, with evidence that maltooligosaccharide acceptors are extended at their non-reducing ends. Is also able to catalyze the reverse reaction in vitro, releasing M1P from glycogen or maltoheptaose in the presence of inorganic phosphate. Also catalyzes disproportionation reactions through maltosyl transfer between maltooligosaccharides. Is probably involved in a branched alpha-glucan biosynthetic pathway from trehalose, together with TreS, Mak and GlgB. The chain is Alpha-1,4-glucan:maltose-1-phosphate maltosyltransferase 1 (glgE1) from Streptomyces coelicolor (strain ATCC BAA-471 / A3(2) / M145).